A 342-amino-acid chain; its full sequence is 4-hydroxy-3-methylbut-2-enyl diphosphate reductase (342 aa).

Cys-47 is a [4Fe-4S] cluster binding site. Residues His-78 and His-111 each contribute to the (2E)-4-hydroxy-3-methylbut-2-enyl diphosphate site. Positions 78 and 111 each coordinate dimethylallyl diphosphate. Isopentenyl diphosphate-binding residues include His-78 and His-111. [4Fe-4S] cluster is bound at residue Cys-133. His-161 serves as a coordination point for (2E)-4-hydroxy-3-methylbut-2-enyl diphosphate. His-161 contacts dimethylallyl diphosphate. His-161 contacts isopentenyl diphosphate. Catalysis depends on Glu-163, which acts as the Proton donor. Residue Thr-201 coordinates (2E)-4-hydroxy-3-methylbut-2-enyl diphosphate. A [4Fe-4S] cluster-binding site is contributed by Cys-231. The (2E)-4-hydroxy-3-methylbut-2-enyl diphosphate site is built by Ser-259, Ser-260, Asn-261, and Ser-303. Dimethylallyl diphosphate contacts are provided by Ser-259, Ser-260, Asn-261, and Ser-303. 4 residues coordinate isopentenyl diphosphate: Ser-259, Ser-260, Asn-261, and Ser-303.

The protein belongs to the IspH family. [4Fe-4S] cluster is required as a cofactor.

It carries out the reaction isopentenyl diphosphate + 2 oxidized [2Fe-2S]-[ferredoxin] + H2O = (2E)-4-hydroxy-3-methylbut-2-enyl diphosphate + 2 reduced [2Fe-2S]-[ferredoxin] + 2 H(+). The enzyme catalyses dimethylallyl diphosphate + 2 oxidized [2Fe-2S]-[ferredoxin] + H2O = (2E)-4-hydroxy-3-methylbut-2-enyl diphosphate + 2 reduced [2Fe-2S]-[ferredoxin] + 2 H(+). Its pathway is isoprenoid biosynthesis; dimethylallyl diphosphate biosynthesis; dimethylallyl diphosphate from (2E)-4-hydroxy-3-methylbutenyl diphosphate: step 1/1. It participates in isoprenoid biosynthesis; isopentenyl diphosphate biosynthesis via DXP pathway; isopentenyl diphosphate from 1-deoxy-D-xylulose 5-phosphate: step 6/6. In terms of biological role, catalyzes the conversion of 1-hydroxy-2-methyl-2-(E)-butenyl 4-diphosphate (HMBPP) into a mixture of isopentenyl diphosphate (IPP) and dimethylallyl diphosphate (DMAPP). Acts in the terminal step of the DOXP/MEP pathway for isoprenoid precursor biosynthesis. This chain is 4-hydroxy-3-methylbut-2-enyl diphosphate reductase, found in Anaplasma marginale (strain St. Maries).